Reading from the N-terminus, the 1085-residue chain is Aminopeptidase N (1085 aa).

The required for ER targeting and membrane association; not cleaved signal peptide spans 1–30; it reads MKLTKGCAYKYIIFTVLILANILYDNKKRC. Positions 1 to 200 are sufficient for targeting to the food vacuole; it reads MKLTKGCAYK…VKKNEPKIHY (200 aa). A disordered region spans residues 108-130; it reads EKGDNNNNNHQNNNGNDNKKRLG. Residues 112 to 123 show a composition bias toward low complexity; that stretch reads NNNNNHQNNNGN. Residues E319, G460, A461, and E463 each contribute to the a peptide site. H496 contributes to the Zn(2+) binding site. The active-site Proton acceptor is E497. Positions 500 and 519 each coordinate Zn(2+).

The protein belongs to the peptidase M1 family. As to quaternary structure, heterodimer of the p68 form and the p35 form which are derived from the p120 precursor. Zn(2+) is required as a cofactor. Post-translationally, the full length protein appears to be cleaved into a 120 kDa precursor. This precursor is then proteolytically cleaved at the N-terminus generating a 96 kDa form which is further processed at the C-terminus into 68 kDa and 35 kDa forms that remain associated.

The protein localises to the parasitophorous vacuole membrane. Its subcellular location is the nucleus. It is found in the cytoplasm. The protein resides in the vacuole lumen. With respect to regulation, inhibited by 1,10-phenanthroline, EDTA and bestatin. Inhibited by (Benzyl)Tyr-Ala (BTA). Activity is not affected by phosphoramidin, PMSF, leupeptin, iodoacetamide or pepstatin. In terms of biological role, displays aminopeptidase activity with a broad substrate specificity. Preferentially, cleaves after Leu and Met, but also cleaves after Ala and Arg. Low activity towards Lys, Phe, Tyr, Trp, Gln, Ser and Gly and negligible activity towards Glu, Asp, Pro, Ile, Thr, Val, His and Asn. Has dipeptidase activity. Plays a role in the terminal stages of host hemoglobin digestion by cleaving the N-terminal residue of small hemoglobin-derived oligopeptides. The chain is Aminopeptidase N from Plasmodium falciparum (isolate 3D7).